Consider the following 571-residue polypeptide: DExH-box ATP-dependent RNA helicase DExH16, mitochondrial (571 aa).

A mitochondrion-targeting transit peptide spans 1–56; it reads MAYSVVRLRKVSALGISRVLQADKGSLWRFHFEPEFGDLLRLGVLTRNYRKNSGSP. In terms of domain architecture, Helicase ATP-binding spans 83–212; the sequence is IARKKKRKVI…HLCGDPAVVP (130 aa). Residue 96-103 participates in ATP binding; sequence GPTNSGKT. The DEIH box; degenerate motif lies at 176–179; that stretch reads DEIQ. A Helicase C-terminal domain is found at 213–399; it reads LVEDILKVTG…GLFPTFDLLS (187 aa).

This sequence belongs to the DExH box helicase family. As to quaternary structure, homodimer; in free form. Component of the mitochondrial degradosome (mtEXO) complex which is a heteropentamer containing 2 copies of SUPV3L1 and 3 copies of PNPT1. Mg(2+) is required as a cofactor. The cofactor is Mn(2+). Weakly expressed.

The protein localises to the nucleus. The protein resides in the mitochondrion matrix. It localises to the mitochondrion nucleoid. The catalysed reaction is ATP + H2O = ADP + phosphate + H(+). Its activity is regulated as follows. Activated by the presence of mitochondrial RNA. In terms of biological role, major helicase player in mitochondrial RNA metabolism. Component of the mitochondrial degradosome (mtEXO) complex, that degrades 3' overhang double-stranded RNA with a 3'-to-5' directionality in an ATP-dependent manner. ATPase and ATP-dependent multisubstrate helicase, able to unwind double-stranded (ds) DNA and RNA, and RNA/DNA heteroduplexes in the 5'-to-3' direction. Plays a role in the RNA surveillance system in mitochondria; regulates the stability of mature mRNAs, the removal of aberrantly formed mRNAs and the rapid degradation of non coding processing intermediates. Required during pollen development. The polypeptide is DExH-box ATP-dependent RNA helicase DExH16, mitochondrial (Arabidopsis thaliana (Mouse-ear cress)).